The chain runs to 352 residues: MAPSTRSPVMHETDEEDWFAEDDAAAPAAAPPTEFDHIARLLRPLTRGDPVALDLLDDAAVLPSRPGYDLVITKDAMVAGVHFLAEEALDVVARKLLRTNLSDLAAKAAEPYGYFLAVGWPSGSDVASRETFARGLAEDGALFDISLLGGDTVTTSGPLVVSATFLGWAPQGETILRRGAKPGDRLMVSGTIGDGWLGLLAQWGEVMDADGAMLRRYRQPEPRVTLRDAMRVHAKAAADVSDGLLADSSHIAKASGCRVRVDLERLPLSPGAQAWLDQQPEQVEGRISLASGGDDYEIVCAVDPNEAWAFRVAAAAAGVKVSEIGEFVEGEGVSAYYKGRDVTPSRLGWLHG.

Residues Asp58, Thr73, and Asp75 each coordinate Mg(2+). His82 lines the substrate pocket. The Mg(2+) site is built by Asp103 and Asp151. ATP contacts are provided by residues 150-151 and Arg177; that span reads GD. Residue Asp239 participates in Mg(2+) binding. Position 241 (Ser241) interacts with ATP. Residue Asp242 participates in Mg(2+) binding. Substrate-binding residues include Asp294 and Trp349.

The protein belongs to the thiamine-monophosphate kinase family.

It carries out the reaction thiamine phosphate + ATP = thiamine diphosphate + ADP. Its pathway is cofactor biosynthesis; thiamine diphosphate biosynthesis; thiamine diphosphate from thiamine phosphate: step 1/1. Its function is as follows. Catalyzes the ATP-dependent phosphorylation of thiamine-monophosphate (TMP) to form thiamine-pyrophosphate (TPP), the active form of vitamin B1. This Caulobacter vibrioides (strain ATCC 19089 / CIP 103742 / CB 15) (Caulobacter crescentus) protein is Thiamine-monophosphate kinase.